The chain runs to 330 residues: Aspartate--ammonia ligase (330 aa).

This sequence belongs to the class-II aminoacyl-tRNA synthetase family. AsnA subfamily.

The protein localises to the cytoplasm. The enzyme catalyses L-aspartate + NH4(+) + ATP = L-asparagine + AMP + diphosphate + H(+). It participates in amino-acid biosynthesis; L-asparagine biosynthesis; L-asparagine from L-aspartate (ammonia route): step 1/1. This is Aspartate--ammonia ligase from Mannheimia succiniciproducens (strain KCTC 0769BP / MBEL55E).